We begin with the raw amino-acid sequence, 137 residues long: Large ribosomal subunit protein uL16 (137 aa).

This sequence belongs to the universal ribosomal protein uL16 family. Part of the 50S ribosomal subunit.

Its function is as follows. Binds 23S rRNA and is also seen to make contacts with the A and possibly P site tRNAs. This is Large ribosomal subunit protein uL16 from Oleidesulfovibrio alaskensis (strain ATCC BAA-1058 / DSM 17464 / G20) (Desulfovibrio alaskensis).